A 118-amino-acid polypeptide reads, in one-letter code: Ribulose bisphosphate carboxylase small subunit 2 (118 aa).

The protein belongs to the RuBisCO small chain family. In terms of assembly, heterohexadecamer of 8 large and 8 small subunits.

In terms of biological role, ruBisCO catalyzes two reactions: the carboxylation of D-ribulose 1,5-bisphosphate, the primary event in carbon dioxide fixation, as well as the oxidative fragmentation of the pentose substrate. Both reactions occur simultaneously and in competition at the same active site. Although the small subunit is not catalytic it is essential for maximal activity. The chain is Ribulose bisphosphate carboxylase small subunit 2 from Acidithiobacillus ferrooxidans (Thiobacillus ferrooxidans).